The chain runs to 36 residues: Insecticidal toxin LaIT1 (36 aa).

2 disulfides stabilise this stretch: cysteine 11-cysteine 23 and cysteine 17-cysteine 29.

In terms of tissue distribution, expressed by the venom gland.

It localises to the secreted. Functionally, affects the activity of both ryanodine-sensitive calcium-release channels RyR1 and RyR2 with high potency. At lower concentrations the toxin increases full openings of the RyRs, and at higher concentrations it inhibits full openings and induce openings to subconductance levels and reduces the number of full conductance openings. The different actions may be attributed to the toxins binding at different sites on the RyRs, with binding at a high-affinity site mediating the increase in full openings and the induction of subconductance states evoked upon binding to a lower-affinity site. Shows insect lethality against crickets and common cutworms (only shows paralysis against cockroaches), but no toxicity is observed in mice. This Liocheles australasiae (Dwarf wood scorpion) protein is Insecticidal toxin LaIT1.